The primary structure comprises 162 residues: NADH-quinone oxidoreductase subunit I (162 aa).

2 consecutive 4Fe-4S ferredoxin-type domains span residues 53–83 and 93–122; these read LRRY…IEPE and RRYD…EGPN. Residues cysteine 63, cysteine 66, cysteine 69, cysteine 73, cysteine 102, cysteine 105, cysteine 108, and cysteine 112 each coordinate [4Fe-4S] cluster.

The protein belongs to the complex I 23 kDa subunit family. NDH-1 is composed of 14 different subunits. Subunits NuoA, H, J, K, L, M, N constitute the membrane sector of the complex. [4Fe-4S] cluster is required as a cofactor.

Its subcellular location is the cell inner membrane. It catalyses the reaction a quinone + NADH + 5 H(+)(in) = a quinol + NAD(+) + 4 H(+)(out). Its function is as follows. NDH-1 shuttles electrons from NADH, via FMN and iron-sulfur (Fe-S) centers, to quinones in the respiratory chain. The immediate electron acceptor for the enzyme in this species is believed to be ubiquinone. Couples the redox reaction to proton translocation (for every two electrons transferred, four hydrogen ions are translocated across the cytoplasmic membrane), and thus conserves the redox energy in a proton gradient. The sequence is that of NADH-quinone oxidoreductase subunit I from Paramagnetospirillum magneticum (strain ATCC 700264 / AMB-1) (Magnetospirillum magneticum).